A 429-amino-acid chain; its full sequence is Histidine--tRNA ligase (429 aa).

The protein belongs to the class-II aminoacyl-tRNA synthetase family. Homodimer.

It is found in the cytoplasm. The enzyme catalyses tRNA(His) + L-histidine + ATP = L-histidyl-tRNA(His) + AMP + diphosphate + H(+). This chain is Histidine--tRNA ligase, found in Pseudomonas putida (strain GB-1).